The sequence spans 241 residues: HTH-type quorum-sensing regulator RhlR (241 aa).

Residues 174–239 enclose the HTH luxR-type domain; sequence LMSNPVCLSH…LAAAYAAALG (66 aa). Positions 198–217 form a DNA-binding region, H-T-H motif; it reads SGEIAIILSISESTVNFHHK.

This sequence belongs to the autoinducer-regulated transcriptional regulatory protein family. Homodimer in the absence of any acyl-L-homoserine lactone. The presence of the autoinducer C4-HSL has no significant effect on dimerization whereas N-(3-oxododecanoyl)-L-homoserine lactone (3O-C12-HSL), the LasR inducer, is able to dissociate the RhlR homodimers into monomers.

It is found in the cytoplasm. Its activity is regulated as follows. Activated by interaction with the autoinducer signal molecule N-butanoyl-L-homoserine lactone (C4-HSL or BHL), the product of the RhlI synthase. Is also activated by binding to rosmarinic acid (RA), a homoserine lactone mimic produced by plants, which induces a broad quorum sensing response, including the induction of all major quorum sensing controlled virulence factors. Rosmarinic acid secretion may be a plant defense mechanism to stimulate a premature quorum sensing response. Its function is as follows. Quorum-sensing regulator that controls the expression of multiple virulence factors in response to extracellular signaling molecules called autoinducers. Involved, among others, in the transcriptional regulation of genes that are responsible for rhamnolipid surfactant biosynthesis. Acts by binding to a specific sequence in the rhlAB regulatory region, both in the presence and in the absence of its autoinducer. In the former case it activates transcription of the promoter, whereas in the latter it acts as a transcriptional repressor. Also regulates the expression of the rmlBDAC operon, encoding dTDP-L-rhamnose biosynthetic enzymes, by binding to the rml box in the promoter region. In addition, is involved in the regulation of the production of elastase (lasB) and pyocyanine. The sequence is that of HTH-type quorum-sensing regulator RhlR from Pseudomonas aeruginosa (strain ATCC 15692 / DSM 22644 / CIP 104116 / JCM 14847 / LMG 12228 / 1C / PRS 101 / PAO1).